A 1107-amino-acid chain; its full sequence is DNA polymerase delta catalytic subunit (1107 aa).

The segment at 1 to 34 (MDGKRRPGPGPGVPPKRARGGLWDDDDAPRPSQF) is disordered. Positions 4–19 (KRRPGPGPGVPPKRAR) match the Nuclear localization signal motif. R19 is modified (omega-N-methylarginine). K574 participates in a covalent cross-link: Glycyl lysine isopeptide (Lys-Gly) (interchain with G-Cter in SUMO2). Zn(2+)-binding residues include C1012, C1015, C1026, and C1029. The CysA-type zinc finger occupies 1012–1029 (CIGCRTVLSHQGAVCEFC). [4Fe-4S] cluster is bound by residues C1058, C1061, C1071, and C1076. Residues 1058-1076 (CQRCQGSLHEDVICTSRDC) carry the CysB motif motif.

The protein belongs to the DNA polymerase type-B family. As to quaternary structure, component of the tetrameric DNA polymerase delta complex (Pol-delta4), which consists of POLD1/p125, POLD2/p50, POLD3/p66/p68 and POLD4/p12, with POLD1 bearing both DNA polymerase and 3' to 5' proofreading exonuclease activities. Within Pol-delta4, directly interacts with POLD2 and POLD4. Following genotoxic stress by DNA-damaging agents, such as ultraviolet light and methyl methanesulfonate, or by replication stress induced by treatment with hydroxyurea or aphidicolin, Pol-delta4 is converted into a trimeric form of the complex (Pol-delta3) by POLD4 degradation. Pol-delta3 is the major form at S phase replication sites and DNA damage sites. POLD1 displays different catalytic properties depending upon the complex it is found in. It exhibits higher proofreading activity and fidelity than Pol-delta4, making it particularly well suited to respond to DNA damage. Directly interacts with PCNA, as do POLD3 and POLD4; this interaction stimulates Pol-delta4 polymerase activity. As POLD2 and POLD4, directly interacts with WRNIP1; this interaction stimulates DNA polymerase delta-mediated DNA synthesis, independently of the presence of PCNA. This stimulation may be due predominantly to an increase of initiation frequency and also to increased processivity. Also observed as a dimeric complex with POLD2 (Pol-delta2 complex). Pol-delta2 is relatively insensitive to the PCNA stimulation (2-5-fold) compared to Pol-delta4 that is stimulated by over 50-fold. The DNA polymerase delta complex interacts with POLDIP2; this interaction is probably mediated through direct binding to POLD2. Interacts with CIAO1. Interacts with POLDIP2. Interacts with RFC1. The cofactor is [4Fe-4S] cluster. Widely expressed, with high levels of expression in heart and lung.

Its subcellular location is the nucleus. It carries out the reaction DNA(n) + a 2'-deoxyribonucleoside 5'-triphosphate = DNA(n+1) + diphosphate. With respect to regulation, regulated by alteration of quaternary structure. Exhibits burst rates of DNA synthesis are about 5 times faster in the presence of POLD4 (Pol-delta4 complex) than in its absence (Pol-delta3 complex), while the affinity of the enzyme for its DNA and dNTP substrates appears unchanged. The Pol-delta3 complex is more likely to proofread DNA synthesis because it cleaves single-stranded DNA twice as fast and transfers mismatched DNA from the polymerase to the exonuclease sites 9 times faster compared to the Pol-delta3 complex. Pol-delta3 also extends mismatched primers 3 times more slowly in the absence of POLD4. The conversion of Pol-delta4 into Pol-delta3 is induced by genotoxic stress or by replication stress leading POLD4 degradation. Stimulated in the presence of PCNA. This stimulation is further increased in the presence of KCTD13/PDIP1, most probably via direct interaction between KCTD13 and POLD2. As the catalytic component of the trimeric (Pol-delta3 complex) and tetrameric DNA polymerase delta complexes (Pol-delta4 complex), plays a crucial role in high fidelity genome replication, including in lagging strand synthesis, and repair. Exhibits both DNA polymerase and 3'- to 5'-exonuclease activities. Requires the presence of accessory proteins POLD2, POLD3 and POLD4 for full activity. Depending upon the absence (Pol-delta3) or the presence of POLD4 (Pol-delta4), displays differences in catalytic activity. Most notably, expresses higher proofreading activity in the context of Pol-delta3 compared with that of Pol-delta4. Although both Pol-delta3 and Pol-delta4 process Okazaki fragments in vitro, Pol-delta3 may be better suited to fulfill this task, exhibiting near-absence of strand displacement activity compared to Pol-delta4 and stalling on encounter with the 5'-blocking oligonucleotides. Pol-delta3 idling process may avoid the formation of a gap, while maintaining a nick that can be readily ligated. Along with DNA polymerase kappa, DNA polymerase delta carries out approximately half of nucleotide excision repair (NER) synthesis following UV irradiation. Under conditions of DNA replication stress, in the presence of POLD3 and POLD4, may catalyze the repair of broken replication forks through break-induced replication (BIR). Involved in the translesion synthesis (TLS) of templates carrying O6-methylguanine, 8oxoG or abasic sites. This Homo sapiens (Human) protein is DNA polymerase delta catalytic subunit.